A 292-amino-acid chain; its full sequence is Probable 2-(5''-triphosphoribosyl)-3'-dephosphocoenzyme-A synthase (292 aa).

This sequence belongs to the CitG/MdcB family.

The catalysed reaction is 3'-dephospho-CoA + ATP = 2'-(5''-triphospho-alpha-D-ribosyl)-3'-dephospho-CoA + adenine. The chain is Probable 2-(5''-triphosphoribosyl)-3'-dephosphocoenzyme-A synthase from Shigella flexneri serotype 5b (strain 8401).